The following is a 551-amino-acid chain: Colicin E3 (551 aa).

Disordered stretches follow at residues 1–74 (MSGG…SGGG), 243–269 (TLSP…NTRD), and 293–320 (PDQV…EAAE). The segment at 1 to 315 (MSGGDGRGHN…RQQEWDATHP (315 aa)) is translocation (T) domain. The span at 20–35 (INGGPTGLGVGGGASD) shows a compositional bias: gly residues. Positions 35–39 (DGSGW) match the Binds to TolB motif. Residues 36-45 (GSGWSSENNP) are compositionally biased toward low complexity. Positions 46–74 (WGGGSGSGIHWGGGSGHGNGGGNGNSGGG) are enriched in gly residues. Positions 296 to 320 (VKQRQDEENRRQQEWDATHPVEAAE) are enriched in basic and acidic residues. A coiled-coil region spans residues 316-378 (VEAAERNYER…IAEIKQFNRF (63 aa)). Positions 316-450 (VEAAERNYER…SAENNLNDEK (135 aa)) are receptor-binding (R) domain. Residues 379-385 (AHDPMAG) carry the Hairpin motif. Residues 386 to 450 (GHRMWQMAGL…SAENNLNDEK (65 aa)) are a coiled coil. A disordered region spans residues 406-505 (NKQAAFDAAA…KRWTGDKGRK (100 aa)). Over residues 430-472 (ESRKKKEDKKRSAENNLNDEKNKPRKGFKDYGHDYHPAPKTEN) the composition is skewed to basic and acidic residues. The linker stretch occupies residues 451-456 (NKPRKG). A ribosome inactivating activity region spans residues 455–551 (KGFKDYGHDY…DPKRNIKKYL (97 aa)). Residues 457 to 551 (FKDYGHDYHP…DPKRNIKKYL (95 aa)) form a cytotoxic RNase (C) domain region. Catalysis depends on histidine 513, which acts as the Proton donor. Glutamate 517 acts as the Proton acceptor in catalysis. Positions 517–551 (EGYRASDGQHLGSFDPKTGNQLKGPDPKRNIKKYL) are disordered. The segment at 530 to 551 (FDPKTGNQLKGPDPKRNIKKYL) is binding of immunity protein. Residue arginine 545 is part of the active site.

This sequence belongs to the cloacin colicin family. In terms of assembly, native colicin E3 is a 1:1 complex of A chain and protein B (cognate immunity protein, Im3); protein A is 1,000-fold more active in inactivating ribosomes than the native complex. The cytotoxic fragment (residues 456-551, C95) forms a 1:1 complex with Im3. The receptor-binding (R) domain binds obliquely to its receptor BtuB without displacing BtuB's central plug; binding unfolds the R domain. The N-terminal 83 residues (T83) bind OmpF; trimeric complexes with colicin E3, BtuB and OmpF can be cross-linked and immunoprecipitated. Probably inserts into the OmpF pore as an unfolded peptide and spans the OmpF pore. In a complex with T.thermophilus 70S ribosomes, cytotoxic fragment C96 contacts 16S rRNA, 23S rRNA, mRNA, P-site tRNA and ribosomal protein uS12.

The protein localises to the secreted. Its function is as follows. Colicins are polypeptide toxins produced by and active against E.coli and closely related bacteria. Cleaves 16S rRNA between adenosine-1492 and guanosine-1493 (E.coli 16S rRNA numbering), releasing a 49 nucleotide (nt) 'colicin' fragment. Inactivates 70S ribosomes or 30S subunits by endonucleolytically cleaving 16S RNA at a specific site about 50 nt from its C-terminus. Produces 5'-OH-guanosine and a 2',3'-cyclic phosphate adenosine. Mixing a susceptible (e.g. strain K12 / A19) and colicin E3 producing strain results in total protein translation inhibition within 11 minutes. Its activity is inhibited by cognate immunity protein Im3. Functionally, uses BtuB, the vitamin B transporter, as a receptor on the outer membrane; binds via the receptor (R) domain. Then the translocation domain (T) probably 'fishes' for its outer membrane translocon protein, OmpF. The N-terminal 83 residues (T83) can bind to and occlude OmpF channels. A complex of the cytotoxic C-terminal 96 residues (C96) plus the immunity protein does not occlude OmpF; upon complex separation from the immunity protein C96 becomes disordered and is able to bind OmpF. The N-terminus probably binds TolB and then reinserts into an empty pore of trimeric OmpF; the rest of the protein is pulled through OmpF and crosses the inner membrane, where the cytotoxic fragment is probably released by protease FtsH. In Escherichia coli, this protein is Colicin E3 (ceaC).